The primary structure comprises 97 residues: Defensin-A2 (97 aa).

The N-terminal stretch at 1–19 (MRTLSLLLALLFLAAQTLA) is a signal peptide. A propeptide spanning residues 20-61 (QPIDEGAEEVITEEPEITETQDPTTIMLIERGIGGDSTDATR) is cleaved from the precursor. 3 disulfides stabilise this stretch: cysteine 66–cysteine 93, cysteine 68–cysteine 82, and cysteine 72–cysteine 92. The propeptide occupies 96-97 (TS).

This sequence belongs to the alpha-defensin family. In terms of tissue distribution, highly expressed in intestine, expressed at lower levels in spleen, and at very low levels in kidney and lung.

The protein localises to the secreted. Its function is as follows. Has antimicrobial activity. The chain is Defensin-A2 from Ornithorhynchus anatinus (Duckbill platypus).